Reading from the N-terminus, the 591-residue chain is Negative elongation factor D (591 aa).

A disordered region spans residues M1–V44. Residues D34–V44 show a composition bias toward acidic residues.

Belongs to the NELF-D family. In terms of assembly, the NELF complex is composed of NELFA, NELFB, NELFCD and NELFE; NELFA and NELFCD form a stable subcomplex that binds primarily through NELFCD to the N-terminus of NELFB. Binds RNA which may help to stabilize the NELF complex on nucleic acid. In vitro, the NELFA:NELFCD subcomplex binds to ssDNA and ssRNA in a sequence- and structure-dependent manner. Interacts with ARAF1. Interacts with PCF11. Interacts with NELFB. Interacts with KAT8.

It is found in the nucleus. Its function is as follows. Essential component of the NELF complex, a complex that negatively regulates the elongation of transcription by RNA polymerase II. The NELF complex, which acts via an association with the DSIF complex and causes transcriptional pausing, is counteracted by the P-TEFb kinase complex. This Mus musculus (Mouse) protein is Negative elongation factor D (Nelfcd).